The following is a 306-amino-acid chain: Homoserine O-succinyltransferase (306 aa).

Cysteine 142 serves as the catalytic Acyl-thioester intermediate. 2 residues coordinate substrate: lysine 163 and serine 192. The Proton acceptor role is filled by histidine 233. Glutamate 235 is an active-site residue. Arginine 247 is a binding site for substrate.

It belongs to the MetA family.

Its subcellular location is the cytoplasm. It catalyses the reaction L-homoserine + succinyl-CoA = O-succinyl-L-homoserine + CoA. The protein operates within amino-acid biosynthesis; L-methionine biosynthesis via de novo pathway; O-succinyl-L-homoserine from L-homoserine: step 1/1. In terms of biological role, transfers a succinyl group from succinyl-CoA to L-homoserine, forming succinyl-L-homoserine. This Pelagibacterium halotolerans (strain DSM 22347 / JCM 15775 / CGMCC 1.7692 / B2) protein is Homoserine O-succinyltransferase.